The chain runs to 315 residues: Methionyl-tRNA formyltransferase (315 aa).

113–116 contacts (6S)-5,6,7,8-tetrahydrofolate; it reads SLLP.

The protein belongs to the Fmt family.

The enzyme catalyses L-methionyl-tRNA(fMet) + (6R)-10-formyltetrahydrofolate = N-formyl-L-methionyl-tRNA(fMet) + (6S)-5,6,7,8-tetrahydrofolate + H(+). Its function is as follows. Attaches a formyl group to the free amino group of methionyl-tRNA(fMet). The formyl group appears to play a dual role in the initiator identity of N-formylmethionyl-tRNA by promoting its recognition by IF2 and preventing the misappropriation of this tRNA by the elongation apparatus. The chain is Methionyl-tRNA formyltransferase from Salmonella enteritidis PT4 (strain P125109).